The following is a 516-amino-acid chain: GMP synthase [glutamine-hydrolyzing] (516 aa).

Positions 6-198 (KVIIVDYGSQ…LFKIAGIKAD (193 aa)) constitute a Glutamine amidotransferase type-1 domain. The active-site Nucleophile is Cys-83. Residues His-172 and Glu-174 contribute to the active site. Residues 199–391 (WSMSSFCERV…LGLPDFIVWR (193 aa)) form the GMPS ATP-PPase domain. 227 to 233 (SGGIDST) provides a ligand contact to ATP.

As to quaternary structure, homodimer.

The catalysed reaction is XMP + L-glutamine + ATP + H2O = GMP + L-glutamate + AMP + diphosphate + 2 H(+). It functions in the pathway purine metabolism; GMP biosynthesis; GMP from XMP (L-Gln route): step 1/1. In terms of biological role, catalyzes the synthesis of GMP from XMP. The chain is GMP synthase [glutamine-hydrolyzing] from Oleidesulfovibrio alaskensis (strain ATCC BAA-1058 / DSM 17464 / G20) (Desulfovibrio alaskensis).